A 382-amino-acid polypeptide reads, in one-letter code: Mannitol-1-phosphate 5-dehydrogenase (382 aa).

A3–G14 provides a ligand contact to NAD(+).

The protein belongs to the mannitol dehydrogenase family.

It carries out the reaction D-mannitol 1-phosphate + NAD(+) = beta-D-fructose 6-phosphate + NADH + H(+). The protein is Mannitol-1-phosphate 5-dehydrogenase of Salmonella enteritidis PT4 (strain P125109).